Consider the following 191-residue polypeptide: Holliday junction branch migration complex subunit RuvA (191 aa).

The segment at Met-1–Gly-64 is domain I. The segment at Thr-65–Gly-137 is domain II. Residues Gly-137–Ala-141 are flexible linker. Residues Val-142–Ala-191 are domain III.

This sequence belongs to the RuvA family. As to quaternary structure, homotetramer. Forms an RuvA(8)-RuvB(12)-Holliday junction (HJ) complex. HJ DNA is sandwiched between 2 RuvA tetramers; dsDNA enters through RuvA and exits via RuvB. An RuvB hexamer assembles on each DNA strand where it exits the tetramer. Each RuvB hexamer is contacted by two RuvA subunits (via domain III) on 2 adjacent RuvB subunits; this complex drives branch migration. In the full resolvosome a probable DNA-RuvA(4)-RuvB(12)-RuvC(2) complex forms which resolves the HJ.

The protein localises to the cytoplasm. The RuvA-RuvB-RuvC complex processes Holliday junction (HJ) DNA during genetic recombination and DNA repair, while the RuvA-RuvB complex plays an important role in the rescue of blocked DNA replication forks via replication fork reversal (RFR). RuvA specifically binds to HJ cruciform DNA, conferring on it an open structure. The RuvB hexamer acts as an ATP-dependent pump, pulling dsDNA into and through the RuvAB complex. HJ branch migration allows RuvC to scan DNA until it finds its consensus sequence, where it cleaves and resolves the cruciform DNA. In Janthinobacterium sp. (strain Marseille) (Minibacterium massiliensis), this protein is Holliday junction branch migration complex subunit RuvA.